The sequence spans 755 residues: DNA ligase 1 (755 aa).

A mitochondrion-targeting transit peptide spans 1–44; sequence MRRLLTGCLLSSARPLKSRLPLLMSSSLPSSAGKKPKQATLARF. R2 carries the post-translational modification N-acetylserine. Polar residues predominate over residues 47 to 60; that stretch reads SMKNKPTEGTPSPK. Disordered regions lie at residues 47–79 and 97–127; these read SMKNKPTEGTPSPKKSSKHMLEDRMDNVSGEEE and PSSMGSNFSSIPSSAPSSGVADSPQQSQRLV. Phosphoserine occurs at positions 58 and 75. Over residues 102-114 the composition is skewed to low complexity; sequence SNFSSIPSSAPSS. Residues S119 and S123 each carry the phosphoserine modification. The segment at 309–318 is interaction with target DNA; the sequence is KLRIGLAEKT. E417 is a binding site for ATP. The active-site N6-AMP-lysine intermediate is K419. Residues R424 and R440 each coordinate ATP. E472 contributes to the Mg(2+) binding site. The tract at residues 493 to 495 is interaction with target DNA; the sequence is KRK. E571 lines the Mg(2+) pocket. K576, R590, and K596 together coordinate ATP.

It belongs to the ATP-dependent DNA ligase family. Mg(2+) is required as a cofactor.

It localises to the mitochondrion. Its subcellular location is the nucleus. It catalyses the reaction ATP + (deoxyribonucleotide)n-3'-hydroxyl + 5'-phospho-(deoxyribonucleotide)m = (deoxyribonucleotide)n+m + AMP + diphosphate.. In terms of biological role, DNA ligase that seals nicks in double-stranded DNA during DNA replication, DNA recombination and DNA repair. The mitochondrial form is required for mitochondrial DNA maintenance but is non-essential while the nuclear form is essential for cell viability. The protein is DNA ligase 1 (CDC9) of Saccharomyces cerevisiae (strain ATCC 204508 / S288c) (Baker's yeast).